Consider the following 128-residue polypeptide: Glycophorin-C (128 aa).

The segment covering Met1–Trp12 has biased composition (polar residues). Residues Met1–Arg48 are disordered. Over Met1 to Met57 the chain is Extracellular. Residue Ser3 is glycosylated (O-linked (GalNAc...) serine). Thr4 is a glycosylation site (O-linked (GalNAc...) threonine). O-linked (GalNAc...) serine glycosylation occurs at Ser6. A glycan (N-linked (GlcNAc...) asparagine) is linked at Asn8. Ser9 is a glycosylation site (O-linked (GalNAc...) serine). Thr10 is a glycosylation site (O-linked (GalNAc...) threonine). Ser15, Ser24, and Ser26 each carry an O-linked (GalNAc...) serine glycan. A compositionally biased stretch (low complexity) spans Met22–Thr33. Residues Thr27, Thr28, Thr31, Thr32, and Thr33 are each glycosylated (O-linked (GalNAc...) threonine). An O-linked (GalNAc...) serine glycan is attached at Ser42. Residues Asp58 to Leu81 form a helical; Signal-anchor for type III membrane protein membrane-spanning segment. Residues Arg82–Ile128 lie on the Cytoplasmic side of the membrane. Phosphoserine occurs at positions 104 and 122. The disordered stretch occupies residues Ala108–Ile128.

The protein belongs to the glycophorin-C family. In terms of processing, O-glycosylated with core 1 or possibly core 8 glycans. In terms of tissue distribution, glycophorin-C is expressed in erythrocytes. Glycophorin-D and IsoGPC are ubiquitously expressed.

Its subcellular location is the cell membrane. This protein is a minor sialoglycoprotein in human erythrocyte membranes. The blood group Gerbich antigens and receptors for Plasmodium falciparum merozoites are most likely located within the extracellular domain. Glycophorin-C plays an important role in regulating the stability of red cells. This Homo sapiens (Human) protein is Glycophorin-C (GYPC).